The following is a 126-amino-acid chain: Non-specific lipid-transfer protein 13 (126 aa).

The N-terminal stretch at 1–20 is a signal peptide; it reads MDTHTTKLVAISLLLLLVIS. Disulfide bonds link Cys36–Cys85, Cys46–Cys61, Cys62–Cys109, and Cys83–Cys123.

It belongs to the plant LTP family.

Plant non-specific lipid-transfer proteins transfer phospholipids as well as galactolipids across membranes. May play a role in wax or cutin deposition in the cell walls of expanding epidermal cells and certain secretory tissues. The chain is Non-specific lipid-transfer protein 13 (LTP13) from Arabidopsis thaliana (Mouse-ear cress).